The primary structure comprises 348 residues: Rhodopsin (348 aa).

An N-acetylmethionine modification is found at M1. The Extracellular segment spans residues 1 to 36 (MNGTEGPNFYVPFSNKTGVVRSPFEYPQYYLAEPWQ). Residues N2 and N15 are each glycosylated (N-linked (GlcNAc...) asparagine). Residues 37-61 (FSMLAAYMFLLIVLGFPINFLTLYV) form a helical membrane-spanning segment. Residues 62–73 (TVQHKKLRTPLN) are Cytoplasmic-facing. A helical membrane pass occupies residues 74–96 (YILLNLAVADLFMVFGGFTTTLY). At 97–110 (TSLHGYFVFGPTGC) the chain is on the extracellular side. Cysteines 110 and 187 form a disulfide. Residues 111–133 (NVEGFFATLGGEIALWSLVVLAI) form a helical membrane-spanning segment. A 'Ionic lock' involved in activated form stabilization motif is present at residues 134 to 136 (ERY). Residues 134–152 (ERYVVVCKPMSNFRFGENH) lie on the Cytoplasmic side of the membrane. A helical membrane pass occupies residues 153–173 (AIMGVAFTWVMALACAAPPLA). At 174 to 202 (GWSRYIPEGMQCSCGIDYYTLKPEINNES) the chain is on the extracellular side. E201 serves as a coordination point for Zn(2+). A helical transmembrane segment spans residues 203-224 (FVIYMFVVHFAIPMIVIFFCYG). The Cytoplasmic segment spans residues 225-252 (QLVFTVKEAAAQQQESATTQKAEKEVTR). The chain crosses the membrane as a helical span at residues 253–274 (MVIIMVIAFLICWVPYASVAFY). At 275 to 286 (IFTHQGSDFGPI) the chain is on the extracellular side. A Zn(2+)-binding site is contributed by Q279. Residues 287–308 (FMTLPAFFAKSSSIYNPVIYIM) traverse the membrane as a helical segment. K296 is subject to N6-(retinylidene)lysine. The Cytoplasmic segment spans residues 309–348 (MNKQFRNCMITTLCCGKNPLGDDEASASASKTETSQVAPA). 2 S-palmitoyl cysteine lipidation sites follow: C322 and C323. Residues 330-348 (DDEASASASKTETSQVAPA) form an interaction with SAG region. Residues S334 and S338 each carry the phosphoserine modification. A phosphothreonine mark is found at T340 and T342. Residue S343 is modified to Phosphoserine.

The protein belongs to the G-protein coupled receptor 1 family. Opsin subfamily. In terms of assembly, homodimer. May form a complex composed of RHO, GRK1 and RCVRN in a Ca(2+)-dependent manner; RCVRN prevents the interaction between GRK1 and RHO. Interacts with GRK1. Interacts (phosphorylated form) with SAG. Interacts with GNAT1. Interacts with GNAT3. SAG and G-proteins compete for a common binding site. Interacts with PRCD; the interaction promotes PRCD stability. Forms a complex with ASAP1 and ARF4. Forms a complex with ASAP1, RAB11A, Rabin8/RAB3IP, ARF4 and RAB11FIP3; the complex regulates Golgi-to-cilia rhodopsin/RHO transport in photoreceptors. Post-translationally, phosphorylated on some or all of the serine and threonine residues present in the C-terminal region. In terms of processing, contains one covalently linked retinal chromophore. Upon light absorption, the covalently bound 11-cis-retinal is converted to all-trans-retinal. After hydrolysis of the Schiff base and release of the covalently bound all-trans-retinal, active rhodopsin is regenerated by binding of a fresh molecule of 11-cis-retinal.

It is found in the membrane. Its subcellular location is the cell projection. It localises to the cilium. The protein resides in the photoreceptor outer segment. Functionally, photoreceptor required for image-forming vision at low light intensity. Required for photoreceptor cell viability after birth. Light-induced isomerization of 11-cis to all-trans retinal triggers a conformational change that activates signaling via G-proteins. Subsequent receptor phosphorylation mediates displacement of the bound G-protein alpha subunit by the arrestin SAG and terminates signaling. The protein is Rhodopsin (RHO) of Canis lupus familiaris (Dog).